The sequence spans 827 residues: Centrosomal protein of 95 kDa (827 aa).

Disordered regions lie at residues 115-145 (ISES…ERTE), 183-249 (GDTA…MVPS), 308-372 (FLTS…MSEK), 388-476 (LGDR…DSCH), and 489-558 (ELRK…KASP). Basic and acidic residues predominate over residues 123-145 (SETEQYSKDSHGEEAGEDLERTE). Positions 187 to 199 (HTFSQRSNGAQNS) are enriched in polar residues. Composition is skewed to basic and acidic residues over residues 327-343 (EATR…DENR) and 360-372 (PLTE…MSEK). S447, S449, and S451 each carry phosphoserine. Coiled coils occupy residues 584–633 (LTKM…VKKE) and 701–795 (LQIQ…DDDA).

The protein resides in the cytoplasm. It is found in the cytoskeleton. It localises to the microtubule organizing center. The protein localises to the centrosome. Its subcellular location is the spindle pole. In Mus musculus (Mouse), this protein is Centrosomal protein of 95 kDa (Cep95).